The primary structure comprises 149 residues: 3-dehydroquinate dehydratase (149 aa).

Catalysis depends on Tyr-26, which acts as the Proton acceptor. Asn-77, His-83, and Asp-90 together coordinate substrate. His-103 (proton donor) is an active-site residue. Substrate contacts are provided by residues 104-105 and Arg-114; that span reads LS.

The protein belongs to the type-II 3-dehydroquinase family. In terms of assembly, homododecamer.

It catalyses the reaction 3-dehydroquinate = 3-dehydroshikimate + H2O. The protein operates within metabolic intermediate biosynthesis; chorismate biosynthesis; chorismate from D-erythrose 4-phosphate and phosphoenolpyruvate: step 3/7. Functionally, catalyzes a trans-dehydration via an enolate intermediate. This Aliivibrio fischeri (strain MJ11) (Vibrio fischeri) protein is 3-dehydroquinate dehydratase.